Consider the following 455-residue polypeptide: Venom prothrombin activator trocarin-D (455 aa).

An N-terminal signal peptide occupies residues 1 to 20 (MAPQLLLCLILTFLWSLPEA). The propeptide occupies 21 to 40 (ESNVFLKSKVANRFLQRTKR). Residues 41–86 (SNSLFEEIRPGNIERECIEEKCSKEEAREVFEDNEKTETFWNVYVD) form the Gla domain. Glutamate 46, glutamate 47, glutamate 54, glutamate 56, glutamate 59, glutamate 60, glutamate 65, glutamate 66, glutamate 69, glutamate 72, and glutamate 75 each carry 4-carboxyglutamate. The cysteines at positions 57 and 62 are disulfide-linked. Residues 86 to 122 (DGDQCSSNPCHYRGTCKDGIGSYTCTCLPNYEGKNCE) form the EGF-like 1; calcium-binding domain. Disulfide bonds link cysteine 90–cysteine 101, cysteine 95–cysteine 110, cysteine 112–cysteine 121, cysteine 129–cysteine 140, cysteine 136–cysteine 149, cysteine 151–cysteine 164, cysteine 172–cysteine 328, cysteine 216–cysteine 221, cysteine 236–cysteine 252, cysteine 376–cysteine 390, and cysteine 401–cysteine 429. Serine 92 carries O-linked (Hex...) serine glycosylation. Positions 129-164 (CRVDNGNCWHFCKRVQSETQCSCAESYRLGVDGHSC) constitute an EGF-like 2 domain. Positions 182–209 (REASLPDFVQSQKATLLKKSDNPSPDIR) are cleaved as a propeptide — activation peptide. Residues 210 to 453 (IVNGMDCKLG…FIPWIKKIMS (244 aa)) form the Peptidase S1 domain. Catalysis depends on histidine 251, which acts as the Charge relay system. A glycan (N-linked (GlcNAc...) asparagine) is linked at asparagine 254. The active-site Charge relay system is aspartate 308. Residue serine 405 is the Charge relay system of the active site.

The protein belongs to the peptidase S1 family. Snake venom subfamily. In terms of assembly, heterodimer of a light chain and a heavy chain; disulfide-linked. Post-translationally, gamma-carboxyglutamate residues are formed by vitamin K dependent carboxylation. These residues are essential for the binding of calcium. The O-linked saccharides at Ser-92 are a mixture of Xyl-Glc, and Glc along with smaller amounts of Xyl-GlcNAc, GlcNAc, Gal, GalNAc, Xyl-Gal, and Xyl-GalNAc, suggesting that the glycosyl transferases responsible for this modification are non-specific. The N-linked carbohydrate at Asn-254 (Asn-45 of the heavy chain) is a sialylated and diantennary oligosaccharide. In terms of tissue distribution, expressed by the venom gland.

Its subcellular location is the secreted. The enzyme catalyses Selective cleavage of Arg-|-Thr and then Arg-|-Ile bonds in prothrombin to form thrombin.. Its activity is regulated as follows. Activated by calcium and phospholipids. Functionally, snake prothrombin activator that attacks the hemostatic system of prey. This protein is functionally similar to blood coagulation factor Xa. Induces cyanosis and death in mice at 1 mg/kg body weight during blood clotting. The protein is Venom prothrombin activator trocarin-D of Tropidechis carinatus (Australian rough-scaled snake).